A 459-amino-acid chain; its full sequence is MMEFLKDFQKMGIYLAYNVNVDAIVYLNEKHIESLIKEFGAENIKKRIDEYPREINEPLDFVARLIHALKTGKPQAVPLVSYEADKWFNSRFKYDFERIGGQVGVIANLLANLDFNKVIAYSPLLGRKQAEMFVNRDNLLYPVVENGKLVLKKPLEAYREDDPVKINRIFEFRAGTKFKLGDETIEVPYSGRFIVACRFEDFARIETSPELKPYLPEIGEMVDGAILSGYQGLRRYYSDGKDANYYLRKAKEDIKLLKKKKDIKIHVEFASIQDRELRKKVIYNIFPLVDSVGMDEAEIAHILSVLGYRELSDRIFTYNRIEDAVLGAKILLDELNLEILQVHTIYYLMYITHNDNPLTEEELTKSLEVGTTLAAARAFLGDIKRPEDVKVGLNIPFNEKGEYVKLRFEEAKAKMRTREYKIVIIPTRLVRNPVSTVGLGDTISAGAFASYLSLLKRKE.

Positions 1-457 (MMEFLKDFQK…FASYLSLLKR (457 aa)) constitute an ADPK domain. Residues E268, E298, and D441 each contribute to the Mg(2+) site. The active-site Proton acceptor is D441.

This sequence belongs to the carbohydrate kinase PfkC family. The cofactor is Mg(2+).

The protein resides in the cytoplasm. It carries out the reaction beta-D-fructose 6-phosphate + ADP = beta-D-fructose 1,6-bisphosphate + AMP + H(+). The protein operates within carbohydrate degradation; glycolysis. Its function is as follows. Catalyzes the phosphorylation of fructose 6-phosphate to fructose 1,6-bisphosphate using ADP as the phosphate donor. The protein is ADP-specific phosphofructokinase of Thermococcus litoralis.